A 76-amino-acid chain; its full sequence is UPF0291 protein BT9727_1737 (76 aa).

It belongs to the UPF0291 family.

The protein localises to the cytoplasm. This chain is UPF0291 protein BT9727_1737, found in Bacillus thuringiensis subsp. konkukian (strain 97-27).